Reading from the N-terminus, the 161-residue chain is Cyclic pyranopterin monophosphate synthase (161 aa).

Substrate-binding positions include 78 to 80 and 116 to 117; these read LCH and ME. The active site involves D131.

The protein belongs to the MoaC family. As to quaternary structure, homohexamer; trimer of dimers.

It catalyses the reaction (8S)-3',8-cyclo-7,8-dihydroguanosine 5'-triphosphate = cyclic pyranopterin phosphate + diphosphate. It participates in cofactor biosynthesis; molybdopterin biosynthesis. In terms of biological role, catalyzes the conversion of (8S)-3',8-cyclo-7,8-dihydroguanosine 5'-triphosphate to cyclic pyranopterin monophosphate (cPMP). The chain is Cyclic pyranopterin monophosphate synthase from Bordetella parapertussis (strain 12822 / ATCC BAA-587 / NCTC 13253).